The following is a 370-amino-acid chain: Leucine-rich repeat-containing protein 19 (370 aa).

Residues 1 to 24 (MKVTGITILFWPLSMILLSDKIQS) form the signal peptide. Topologically, residues 25–270 (SKREVQCNFT…SEHEPLGKSW (246 aa)) are extracellular. N-linked (GlcNAc...) asparagine glycans are attached at residues Asn32, Asn37, Asn62, and Asn95. LRR repeat units follow at residues 46-71 (KKDV…VLQT), 72-95 (YFLL…GFGN), 96-119 (LSSL…AFLG), 120-143 (LNKL…VFVP), and 145-168 (RSLK…LFHL). The region spanning 176–227 (NLWNCSCSLFNLQNWLNTSNVTLENENITMCSYPNSLQSYNIKTVPHKAECH) is the LRRCT domain. Asn179, Asn192, Asn195, Asn202, Asn251, and Asn256 each carry an N-linked (GlcNAc...) asparagine glycan. A helical transmembrane segment spans residues 271 to 291 (AFLVGVVVTVLTTSLLIFIAI). At 292-370 (KCPIWYNILL…IDIHELCEEN (79 aa)) the chain is on the cytoplasmic side.

As to quaternary structure, interacts with TRAF2 and TRAF6. In terms of tissue distribution, expressed in renal collecting duct epithelial cells.

It localises to the membrane. Its activity is regulated as follows. Activated by TLR ligands such as LPS, bacterial DNA and peptidoglycan. In terms of biological role, pathogen-recognition receptor which mediates the activation of TRAF2- and TRAF6 NF-kappa-B signaling pathways and induces the expression of pro-inflammatory cytokines. In kidney, prevents infection by uropathogenic bacteria by inducing the production of cytokines, chemokines and antimicrobial substances. In gut, involved in host-microbiota interactions, plays a critical role in promoting the recruitment of immune cells and intestinal inflammation. The polypeptide is Leucine-rich repeat-containing protein 19 (Homo sapiens (Human)).